Reading from the N-terminus, the 29-residue chain is RICPRILMECSSDSDCLAECICLENGFCG.

Cystine bridges form between Cys3/Cys20, Cys10/Cys22, and Cys16/Cys28.

This sequence belongs to the protease inhibitor I7 (squash-type serine protease inhibitor) family.

It localises to the secreted. Inhibits trypsin. The polypeptide is Trypsin inhibitor 3 (Luffa aegyptiaca (Sponge gourd)).